Here is a 692-residue protein sequence, read N- to C-terminus: Elongation factor G (692 aa).

Residues 8–283 (QDLRNIGIVA…AVVDYLPSPL (276 aa)) enclose the tr-type G domain. GTP contacts are provided by residues 17–24 (AHIDAGKT), 81–85 (DTPGH), and 135–138 (NKLD).

It belongs to the TRAFAC class translation factor GTPase superfamily. Classic translation factor GTPase family. EF-G/EF-2 subfamily.

It localises to the cytoplasm. Functionally, catalyzes the GTP-dependent ribosomal translocation step during translation elongation. During this step, the ribosome changes from the pre-translocational (PRE) to the post-translocational (POST) state as the newly formed A-site-bound peptidyl-tRNA and P-site-bound deacylated tRNA move to the P and E sites, respectively. Catalyzes the coordinated movement of the two tRNA molecules, the mRNA and conformational changes in the ribosome. This is Elongation factor G from Hydrogenobaculum sp. (strain Y04AAS1).